A 623-amino-acid chain; its full sequence is Actin-related protein 8 (623 aa).

Residues 1–24 (MTQTDRDAENGRDREKDREKEQQR) show a composition bias toward basic and acidic residues. The segment at 1 to 29 (MTQTDRDAENGRDREKDREKEQQRGVKRP) is disordered. 283-286 (DVGD) serves as a coordination point for ATP. The segment covering 428–438 (TQSKQDQSSKA) has biased composition (low complexity). The tract at residues 428–458 (TQSKQDQSSKASADRKSFPKPSSFEGESSVC) is disordered.

This sequence belongs to the actin family. ARP8 subfamily. In terms of assembly, component of the chromatin remodeling INO80 complex; specifically part of a complex module associated with the DBINO domain of INO80. Exists as monomers and dimers, but the dimer is most probably the biologically relevant form required for stable interactions with histones that exploits the twofold symmetry of the nucleosome core.

Its subcellular location is the nucleus. The protein resides in the chromosome. Functionally, plays an important role in the functional organization of mitotic chromosomes. Exhibits low basal ATPase activity, and unable to polymerize. In terms of biological role, proposed core component of the chromatin remodeling INO80 complex which is involved in transcriptional regulation, DNA replication and probably DNA repair. Required for the recruitment of INO80 (and probably the INO80 complex) to sites of DNA damage Strongly prefer nucleosomes and H3-H4 tetramers over H2A-H2B dimers, suggesting it may act as a nucleosome recognition module within the complex. The polypeptide is Actin-related protein 8 (actr8) (Danio rerio (Zebrafish)).